A 432-amino-acid chain; its full sequence is Enolase (432 aa).

Position 167 (Q167) interacts with (2R)-2-phosphoglycerate. The active-site Proton donor is E209. Residues D246, E291, and D318 each coordinate Mg(2+). (2R)-2-phosphoglycerate contacts are provided by K343, R372, S373, and K394. The active-site Proton acceptor is K343.

Belongs to the enolase family. In terms of assembly, component of the RNA degradosome, a multiprotein complex involved in RNA processing and mRNA degradation. It depends on Mg(2+) as a cofactor.

The protein resides in the cytoplasm. The protein localises to the secreted. It is found in the cell surface. The catalysed reaction is (2R)-2-phosphoglycerate = phosphoenolpyruvate + H2O. It participates in carbohydrate degradation; glycolysis; pyruvate from D-glyceraldehyde 3-phosphate: step 4/5. Its function is as follows. Catalyzes the reversible conversion of 2-phosphoglycerate (2-PG) into phosphoenolpyruvate (PEP). It is essential for the degradation of carbohydrates via glycolysis. This is Enolase from Aliivibrio fischeri (strain ATCC 700601 / ES114) (Vibrio fischeri).